Consider the following 322-residue polypeptide: Solute carrier family 35 member B1 (322 aa).

Transmembrane regions (helical) follow at residues 12-32 (LRLP…GILQ), 51-71 (FALT…KILI), 85-105 (WLYA…NSAL), 136-156 (YPLA…LFMY), 168-188 (TVGF…LTGV), 210-230 (LWST…WEFL), 243-263 (ILLF…TVVY), and 285-305 (VILF…LVFL). Residues 318–322 (KKTSH) carry the Di-lysine motif motif.

The protein belongs to the nucleotide-sugar transporter family. SLC35B subfamily.

It is found in the endoplasmic reticulum membrane. It carries out the reaction ADP(in) + ATP(out) = ADP(out) + ATP(in). The enzyme catalyses UDP(out) + ATP(in) = UDP(in) + ATP(out). The catalysed reaction is UTP(out) + ATP(in) = UTP(in) + ATP(out). It catalyses the reaction dATP(out) + ATP(in) = dATP(in) + ATP(out). Functionally, ATP:ADP antiporter that catalyzes the exchange of ATP and ADP across the endoplasmic reticulum (ER) membrane. Imports ATP from the cytosol to the ER lumen and exports ADP in the opposite direction. Regulates ER energy metabolism and protein biogenesis. Appears to be part of a calcium-dependent ER to cytosol low energy response axis, where calcium efflux from ER to the cytosol triggers ATP import into the ER lumen to maintain sufficient ATP supply. Provides ATP to ER chaperone HSPA5 that drives protein folding and trafficking in the ER. Can transport dATP, UTP or UDP in exchange for ATP, but the physiological relevance of this process remains to be established. This is Solute carrier family 35 member B1 (Slc35b1) from Rattus norvegicus (Rat).